The sequence spans 546 residues: Glucose-6-phosphate isomerase (546 aa).

Residue Glu353 is the Proton donor of the active site. Catalysis depends on residues His384 and Lys512.

It belongs to the GPI family.

The protein resides in the cytoplasm. It carries out the reaction alpha-D-glucose 6-phosphate = beta-D-fructose 6-phosphate. It participates in carbohydrate biosynthesis; gluconeogenesis. The protein operates within carbohydrate degradation; glycolysis; D-glyceraldehyde 3-phosphate and glycerone phosphate from D-glucose: step 2/4. Its function is as follows. Catalyzes the reversible isomerization of glucose-6-phosphate to fructose-6-phosphate. This is Glucose-6-phosphate isomerase from Actinobacillus pleuropneumoniae serotype 3 (strain JL03).